Consider the following 181-residue polypeptide: Adenine phosphoribosyltransferase (181 aa).

Belongs to the purine/pyrimidine phosphoribosyltransferase family. As to quaternary structure, homodimer.

Its subcellular location is the cytoplasm. It carries out the reaction AMP + diphosphate = 5-phospho-alpha-D-ribose 1-diphosphate + adenine. Its pathway is purine metabolism; AMP biosynthesis via salvage pathway; AMP from adenine: step 1/1. Its function is as follows. Catalyzes a salvage reaction resulting in the formation of AMP, that is energically less costly than de novo synthesis. The chain is Adenine phosphoribosyltransferase from Pseudoalteromonas translucida (strain TAC 125).